Reading from the N-terminus, the 161-residue chain is Putative allophycocyanin subunit alpha 2 (161 aa).

Asn71 is subject to N4-methylasparagine. (2R,3E)-phycocyanobilin is bound at residue Cys81.

Belongs to the phycobiliprotein family. In terms of assembly, heterohexamer of two alpha chains, one alpha-B chain and three beta chains. Post-translationally, contains one covalently linked phycocyanobilin chromophore. The chromophore is added by phycocyanobilin lyase CpcS 1.

The protein resides in the cellular thylakoid membrane. Functionally, light-harvesting photosynthetic bile pigment-protein from the phycobiliprotein complex. Allophycocyanin has a maximum absorption at approximately 650 to 653 nanometers. The sequence is that of Putative allophycocyanin subunit alpha 2 (apcA2) from Nostoc sp. (strain PCC 7120 / SAG 25.82 / UTEX 2576).